The following is a 392-amino-acid chain: S-adenosylmethionine synthase (392 aa).

Position 10 (Glu10) interacts with Mg(2+). Residue His16 participates in ATP binding. Glu44 lines the K(+) pocket. Glu57 and Gln100 together coordinate L-methionine. Residues 168–170, 236–239, Asp247, 253–254, Ala270, Lys274, and Lys278 each bind ATP; these read DGK, SGRF, and RK. An L-methionine-binding site is contributed by Asp247. Lys278 contacts L-methionine.

The protein belongs to the AdoMet synthase family. Homotetramer. Requires Mn(2+) as cofactor. It depends on Mg(2+) as a cofactor. Co(2+) serves as cofactor. K(+) is required as a cofactor.

The protein resides in the cytoplasm. It carries out the reaction L-methionine + ATP + H2O = S-adenosyl-L-methionine + phosphate + diphosphate. Its pathway is amino-acid biosynthesis; S-adenosyl-L-methionine biosynthesis; S-adenosyl-L-methionine from L-methionine: step 1/1. Catalyzes the formation of S-adenosylmethionine from methionine and ATP. The reaction comprises two steps that are both catalyzed by the same enzyme: formation of S-adenosylmethionine (AdoMet) and triphosphate, and subsequent hydrolysis of the triphosphate. In Phaseolus lunatus (Lima bean), this protein is S-adenosylmethionine synthase (SAMS).